We begin with the raw amino-acid sequence, 834 residues long: Enhancer of filamentation 1 (834 aa).

Residues 3–65 form the SH3 domain; sequence ARNLMARALY…PGNRVKLLIG (63 aa). A phosphotyrosine mark is found at Y92, Y164, Y166, Y177, Y189, Y214, and Y223. A Phosphoserine modification is found at S296. Y317 is subject to Phosphotyrosine. Disordered regions lie at residues 328–402 and 584–624; these read PPAE…DKRL and SQMP…SERS. The segment covering 332–344 has biased composition (basic and acidic residues); sequence TSEKANPEERDGV. A Caspase cleavage related site motif is present at residues 360-363; it reads DVVD. Positions 368–397 are enriched in low complexity; that stretch reads LSFSSTGSTRSNMSTSSTTSKESSVSASPS. At S369 the chain carries Phosphoserine. Residues 710–760 are divergent helix-loop-helix motif; it reads FYYDQCETHYISLLNAIDALFSCVSSAQPPRIFVAHSKFVILSAHKLVFIG. The required for interaction with PLK1 stretch occupies residues 710–834; the sequence is FYYDQCETHY…KRSLLEMATF (125 aa). S780 is subject to Phosphoserine. T804 carries the post-translational modification Phosphothreonine.

The protein belongs to the CAS family. As to quaternary structure, homodimer. Forms heterodimers with BCAR1/p130cas. Forms complexes with PTK2B/RAFTK, adapter protein CRKL and LYN kinase. Part of a complex composed of NEDD9, AURKA and CTTN; within the complex NEDD9 acts as a scaffold protein and is required for complex formation. Part of a ternary complex composed of SMAD3, ITCH/AIP4 and NEDD9/HEF1; within the complex NEDD9/HEF1 interacts (via N-terminus) with ITCH/AIP4; the complex mediates ubiquitination and proteasomal degradation of NEDD9/HEF1. Interacts with ID2. Interacts with CTTN (via N-terminus). Interacts with MICAL. Interacts with TXNL4/DIM1. Interacts with BCAR3 (via Ras-GEF domain). Interacts with SH2D3C isoform 1 and isoform 2. Interacts with BCAR3. Interacts with ECT2. Interacts with PTPN11/SHP-2 (via SH2 domains); the interaction is enhanced when NEDD9/CAS-L is tyrosine phosphorylated. Interacts (via C-terminus) with PLK1 (via polo box domain). Interacts with NKX2-5. Interacts with SMAD3; the interaction is inhibited by oxidation of NEDD9. Interacts with ABL1; interaction is induced by CXCL12-mediated phosphorylation of NEDD/HEF1. Interacts (via SH3 domain) with PTK2/FAK. Interacts with FYN; in the presence of PTK2. Interacts with INPPL1/SHIP2. Post-translationally, polyubiquitinated by ITCH/AIP4, leading to proteasomal degradation. In terms of processing, PTK2/FAK1 phosphorylates the protein at the YDYVHL motif (conserved among all cas proteins) following integrin stimulation. The SRC family kinases (FYN, SRC, LCK and CRK) are recruited to the phosphorylated sites and can phosphorylate other tyrosine residues. Ligation of either integrin beta-1 or B-cell antigen receptor on tonsillar B-cells and B-cell lines promotes tyrosine phosphorylation and both integrin and BCR-mediated tyrosine phosphorylation requires an intact actin network. Phosphorylation is required to recruit NEDD9 to T-cell receptor microclusters at the periphery of newly formed immunological synapses. In fibroblasts transformation with oncogene v-ABL results in an increase in tyrosine phosphorylation. Transiently phosphorylated following CD3 cross-linking and this phosphorylated form binds to CRKL and C3G. A mutant lacking the SH3 domain is phosphorylated upon CD3 cross-linking but not upon integrin beta-1 cross-linking. Tyrosine phosphorylation occurs upon stimulation of the G-protein coupled C1a calcitonin receptor. Calcitonin-stimulated tyrosine phosphorylation is mediated by calcium- and protein kinase C-dependent mechanisms and requires the integrity of the actin cytoskeleton. Phosphorylation at Ser-369 induces proteasomal degradation. Phosphorylated by LYN. Phosphorylation at Ser-780 by CSNK1D or CSNK1E, or phosphorylation of Thr-804 by CSNK1E enhances the interaction of NEDD9 with PLK1.

Its subcellular location is the cytoplasm. The protein resides in the cell cortex. The protein localises to the nucleus. It localises to the golgi apparatus. It is found in the cell projection. Its subcellular location is the lamellipodium. The protein resides in the cell junction. The protein localises to the focal adhesion. It localises to the cytoskeleton. It is found in the spindle pole. Its subcellular location is the cilium. The protein resides in the cilium basal body. The protein localises to the basolateral cell membrane. Functionally, negatively regulates embryonic fibroblast migration. May play an important role in integrin beta-1 or B cell antigen receptor (BCR) mediated signaling in B- and T-cells. Integrin beta-1 stimulation leads to recruitment of various proteins including CRKl and SHPTP2 to the tyrosine phosphorylated form. Promotes adhesion and migration of lymphocytes; as a result required for the correct migration of lymphocytes to the spleen and other secondary lymphoid organs. Plays a role in the organization of T-cell F-actin cortical cytoskeleton and the centralization of T-cell receptor microclusters at the immunological synapse. Negatively regulates cilia outgrowth in polarized cysts. Modulates cilia disassembly via activation of AURKA-mediated phosphorylation of HDAC6 and subsequent deacetylation of alpha-tubulin. In conjunction with NKX2-5, positively regulates transcription of genes such as COL3A1 and MMP2, resulting in increased pulmonary endothelial fibrosis in response to hypoxia. Positively regulates RANKL-induced osteoclastogenesis. Required for the maintenance of hippocampal dendritic spines in the dentate gyrus and CA1 regions, thereby involved in spatial learning and memory. The polypeptide is Enhancer of filamentation 1 (Canis lupus familiaris (Dog)).